The sequence spans 898 residues: MRPMRIFLNDDRHVMAKHSVVYPTQEELEAVQNMVSHTERALKAVSDWIDQQEKDSGIEQENPEPEETETTEEGKDSEAKTGENPTRTLRGVMRVGLVAKGLLLKGDLDLELVLLCRDKPTISLLKRVADNLVLQFETVSEDKYEVVQNIREASIVIKNTKEPPLTLHIRLTSPLVREEVEKLSAGETLTVSDPPDVLDRHKCLAALASLRHAKWFQARANGLKSCVIVIRVLRDLCTRVPTWEPLRGWPLELLCEKAIGTANRPMGAGEALRRVLECLSSGILMPDGPGLYDPCEKDASDALEHLERQQREDITQSAQHALRLAAFGQLHKVLGMDPLPTKMPKKTKIEIPIIDYTVQIPPSTTYAMPALKRPIEEDGEDKSPSKKKKKIQKKDEKSEPPQAMNALMRLNQLKPGLQYKLISQTGPVHAPIFTMSVEVDDKTFEASGPSKKTAKLHVAVKVLQDMGLPTGIDEKEESVDESEEKPVLQTPSQTADSEQADSSAGDQSESGKQQGPILTRHGKNPVMELNEKRRGLKYELISETGGSHDKRFIMEVEVDGVKFQGNGSNKKVAKAYAALSALEKLFPDYTTYTEAPKKKRPPMMPRGGPKFAGKHNQGFGMMYNEVPPPQVMRGRGRGGMNRGRGRGRGGFGGGNYGGYMNSGGYGGGYGGNNYQTSATAGYSQFYSNGGASGNAGGGGAGSGGYSSYYQGEGYNAPTPPKPFVKKPPPPQQQQQPPPQHASNPPKPSYNQGYQGHQGGQQQQQPQQQQQQTYNQNQYSNYGPPQKQKGGYNQGTQGAASAGSYNYSNSYTGGTACRVRQWRGCRRARRPALTQRQALVTTQGRTPAMVQPAVPHRTKVTHSRTTIKVPPDRTTAALQIITSPLREEQEVMAGIQITT.

The region spanning 5–379 (RIFLNDDRHV…ALKRPIEEDG (375 aa)) is the DZF domain. 5 disordered regions span residues 52–87 (QEKDSGIEQENPEPEETETTEEGKDSEAKTGENPTR), 374–403 (PIEEDGEDKSPSKKKKKIQKKDEKSEPPQA), 468–529 (LPTG…VMEL), 627–651 (PPPQVMRGRGRGGMNRGRGRGRGGF), and 711–799 (GEGY…QGAA). Residues 61 to 71 (ENPEPEETETT) show a composition bias toward acidic residues. 2 stretches are compositionally biased toward basic and acidic residues: residues 72–81 (EEGKDSEAKT) and 374–384 (PIEEDGEDKSP). Residues 372 to 390 (KRPIEEDGEDKSPSKKKKK) carry the Bipartite nuclear localization signal motif. The 70-residue stretch at 399–468 (EPPQAMNALM…AVKVLQDMGL (70 aa)) folds into the DRBM 1 domain. Residues 474 to 483 (EKEESVDESE) show a composition bias toward acidic residues. The span at 489 to 513 (QTPSQTADSEQADSSAGDQSESGKQ) shows a compositional bias: polar residues. The region spanning 521–587 (HGKNPVMELN…ALSALEKLFP (67 aa)) is the DRBM 2 domain. The span at 637–651 (RGGMNRGRGRGRGGF) shows a compositional bias: gly residues. The segment covering 717–747 (PTPPKPFVKKPPPPQQQQQPPPQHASNPPKP) has biased composition (pro residues). The span at 749–782 (YNQGYQGHQGGQQQQQPQQQQQQTYNQNQYSNYG) shows a compositional bias: low complexity.

As to quaternary structure, a component of a ybx2/frgy2-containing mRNA-ribonucleoprotein (mRNP) complex. Also a component of the CCAAT box transcription factor (CBTF) complex. In terms of processing, phosphorylated. Phosphorylation affects nuclear translocation. Post-translationally, methylated by protein arginine N-methyltransferase 1 (prmt1b) in the RGG-rich domain. Methylation decreases DNA-binding and thereby decreases transcription of the gata2 gene, but does not regulate dsRNA binding or subcellular localization.

It localises to the nucleus. The protein localises to the cytoplasm. Its function is as follows. RNA-binding protein that plays an essential role in the biogenesis of circular RNAs (circRNAs) which are produced by back-splicing circularization of pre-mRNAs. Within the nucleus, promotes circRNAs processing by stabilizing the regulatory elements residing in the flanking introns of the circularized exons. Plays thereby a role in the back-splicing of a subset of circRNAs. As a consequence, participates in a wide range of transcriptional and post-transcriptional processes. Binds to poly-U elements and AU-rich elements (AREs) in the 3'-UTR of target mRNAs. Upon viral infection, ILF3 accumulates in the cytoplasm and participates in the innate antiviral response. Mechanistically, ILF3 becomes phosphorylated and activated by the double-stranded RNA-activated protein kinase/PKR which releases ILF3 from cellular mature circRNAs. In turn, unbound ILF3 molecules are able to interact with and thus inhibit viral mRNAs. Has a cytoplasmic role early in development as part of a ribonucleoprotein (mRNP) complex which may regulate mRNA transport and/or translation. Following nuclear localization at the mid-blastula transition, acts as a transcription factor and binds the 5'-CCAAT-3' promoter sequence to regulate transcription of the gata2 gene as a subunit of the CCAAT box transcription factor (CBTF). Its role as an mRNP component negatively regulates its activity as a transcription factor by precluding its nuclear localization. This chain is Interleukin enhancer-binding factor 3-B (ilf3-b), found in Xenopus laevis (African clawed frog).